An 892-amino-acid polypeptide reads, in one-letter code: Protein RRP6-like 3 (892 aa).

A 3'-5' exonuclease domain is found at 119–287 (YVWVETESQL…IADSLTTELK (169 aa)). Residues 350–436 (SLNAEELVRK…CSHLDDIYKM (87 aa)) form the HRDC domain. The disordered stretch occupies residues 785-811 (VDDSGDGTSEGDGAKELNDTQCNGNTL).

It is found in the cytoplasm. The protein resides in the cytosol. The protein is Protein RRP6-like 3 of Arabidopsis thaliana (Mouse-ear cress).